A 248-amino-acid chain; its full sequence is MVKQIRRYALFQATPDSEFVKEMYGGYFNVFVSAFGDEGEQWDLFRVIDGEFPRDEDLEKYEGFVISGSLHDAFTEEDWIIELCSVCKKLDVMKKKILGICFGHQIICRVRGGKVGRARKGPDIGLGNITIVQDVIKPGDYFDQIESLSIIQCHRDEVLEPPESARVIGFSDKCDVEIFSVEDHLLCFQGHPEYNKEILLEIIDRVHKIKFVEEEILEKAKDSIKKFEPDTQRLHMLCKNFLKGRRTH.

Positions Ser17–Val212 constitute a Glutamine amidotransferase type-1 domain. Residue Cys101 is the Nucleophile of the active site. Catalysis depends on residues His191 and Glu193.

The protein belongs to the peptidase C26 family.

The protein resides in the cytoplasm. Its subcellular location is the cytosol. The enzyme catalyses an S-[(1E)-1-(hydroxyimino)-omega-(methylsulfanyl)alkyl]-L-glutathione + H2O = an S-[(1E)-1-(hydroxyimino)-omega-(methylsulfanyl)alkyl]-L-cysteinylglycine + L-glutamate. It carries out the reaction (E)-1-(glutathione-S-yl)-2-(1H-indol-3-yl)acetohydroximate + H2O = (E)-1-(glycyl-L-cystein-S-yl)-2-(1H-indol-3-yl)acetohydroximate + L-glutamate. It catalyses the reaction 2-(glutathion-S-yl)-2-(1H-indol-3-yl)acetonitrile + H2O = 2-(glycyl-L-cystein-S-yl)-2-(1H-indol-3-yl)acetonitrile + L-glutamate. The catalysed reaction is (Z)-1-(glutathione-S-yl)-2-phenylacetohydroximate + H2O = (Z)-1-(glycyl-L-cystein-S-yl)-2-phenylacetohydroximate + L-glutamate. Its pathway is secondary metabolite biosynthesis. Its function is as follows. Involved in glucosinolate biosynthesis. Hydrolyzes the gamma-glutamyl peptide bond of several glutathione (GSH) conjugates to produce Cys-Gly conjugates related to glucosinolates. The gamma-Glu-Cys-Gly-GSH conjugates are the sulfur-donating molecule in glucosinolate biosynthesis. The protein is Gamma-glutamyl peptidase 2 of Arabidopsis thaliana (Mouse-ear cress).